The sequence spans 178 residues: Nuclear transcription factor Y subunit B-2 (178 aa).

A DNA-binding region spans residues 39-45 (LPIANIS). Residues 66–77 (LQECVSEFISFV) are subunit association domain (SAD). Positions 131–156 (SSKAGDGSVKKDTIGPHSGASSSSAQ) are disordered.

This sequence belongs to the NFYB/HAP3 subunit family. Heterotrimeric transcription factor composed of three components, NF-YA, NF-YB and NF-YC. NF-YB and NF-YC must interact and dimerize for NF-YA association and DNA binding. Interacts with NFYC4 and NFYC6. As to expression, ubiquitous.

The protein resides in the nucleus. In terms of biological role, component of the NF-Y/HAP transcription factor complex. The NF-Y complex stimulates the transcription of various genes by recognizing and binding to a CCAAT motif in promoters. May regulate the expression of photosynthetic genes, and may be involved in chloroplast and amyloplast development. This chain is Nuclear transcription factor Y subunit B-2 (NFYB2), found in Oryza sativa subsp. japonica (Rice).